A 316-amino-acid polypeptide reads, in one-letter code: RNA interference defective protein 11 (316 aa).

The RING-type; degenerate zinc finger occupies 183–218 (CYINFNCQTSKVMFGCGHVYCEQCLNSWNDKPCSVC).

As to quaternary structure, interacts (via RING-type zinc finger domain) with rde-10.

In terms of biological role, in complex with rde-10, required in the endogenous and exogenous siRNA pathway for biogenesis and accumulation of secondary small interfering RNA (siRNA) intermediates, such as 22G-siRNAs derived from ergo-1 targets. The protein is RNA interference defective protein 11 of Caenorhabditis elegans.